The following is a 541-amino-acid chain: Glucose-6-phosphate isomerase (541 aa).

E354 serves as the catalytic Proton donor. Catalysis depends on residues H385 and K505.

This sequence belongs to the GPI family.

The protein localises to the cytoplasm. The enzyme catalyses alpha-D-glucose 6-phosphate = beta-D-fructose 6-phosphate. It functions in the pathway carbohydrate biosynthesis; gluconeogenesis. The protein operates within carbohydrate degradation; glycolysis; D-glyceraldehyde 3-phosphate and glycerone phosphate from D-glucose: step 2/4. In terms of biological role, catalyzes the reversible isomerization of glucose-6-phosphate to fructose-6-phosphate. This chain is Glucose-6-phosphate isomerase, found in Cupriavidus metallidurans (strain ATCC 43123 / DSM 2839 / NBRC 102507 / CH34) (Ralstonia metallidurans).